The sequence spans 274 residues: Insulin-like growth factor-binding protein-like 1 (274 aa).

Residues 1-21 (MPRSPGLFLLLLVLQPLPALG) form the signal peptide. The IGFBP N-terminal domain occupies 30 to 105 (RNPECGPCRP…PEGTGLCVCA (76 aa)). Cystine bridges form between Cys34/Cys59, Cys37/Cys61, Cys42/Cys62, Cys48/Cys65, Cys73/Cys87, Cys81/Cys102, and Cys111/Cys147. The Kazal-like domain occupies 91–149 (AAGAAPEGTGLCVCAQRGSVCGSDGRSYPSVCALRLRARQAPRALPGHLHKARDGPCEF). One can recognise an Ig-like C2-type domain in the interval 151-255 (PVVITPPQSV…GEAQSHGTVT (105 aa)). An N-linked (GlcNAc...) asparagine glycan is attached at Asn162. A disulfide bridge links Cys172 with Cys239.

The protein localises to the secreted. IGF-binding proteins prolong the half-life of IGFs and have been shown to either inhibit or stimulate the growth promoting effects of the IGFs in cell culture. They alter the interaction of IGFs with their cell surface receptors. The sequence is that of Insulin-like growth factor-binding protein-like 1 (IGFBPL1) from Bos taurus (Bovine).